The following is a 266-amino-acid chain: Putative hydro-lyase VF_1377 (266 aa).

The protein belongs to the D-glutamate cyclase family.

The protein is Putative hydro-lyase VF_1377 of Aliivibrio fischeri (strain ATCC 700601 / ES114) (Vibrio fischeri).